The sequence spans 126 residues: Pancreatic polypeptide prohormone (126 aa).

The signal sequence occupies residues 1–26; that stretch reads MTATRCCLWLLLLGTCMALLLPEAWG. A Tyrosine amide modification is found at Y62. Residues 77–126 are disordered; the sequence is RQSHAAAPGGSHRHPPAGLPAAKGGTGVSGSPPKPWDCLPCRAHSLPSQS.

The protein belongs to the NPY family. In terms of processing, no icosapeptide-like peptide is cleaved from the C-terminal.

It is found in the secreted. In terms of biological role, hormone secreted by pancreatic cells that acts as a regulator of pancreatic and gastrointestinal functions probably by signaling through the G protein-coupled receptor NPY4R2. This chain is Pancreatic polypeptide prohormone (PPY), found in Cavia porcellus (Guinea pig).